Consider the following 361-residue polypeptide: Alternative oxidase, mitochondrial (361 aa).

Residues 156-178 (YLVRNVFLESVAGVPGMVAGMLR) form a helical membrane-spanning segment. Glu164, Glu203, and His206 together coordinate Fe cation. Residues 218–240 (WFMRLAVLGAQGVFFNAMFLSYL) form a helical membrane-spanning segment. Residues Glu254, Glu309, and His312 each contribute to the Fe cation site. A compositionally biased stretch (polar residues) spans 318 to 328 (TLGNLDQNSDP). Residues 318–361 (TLGNLDQNSDPNPYASKYDNPNVPHPRKDIKYLKPSGWEREEVM) form a disordered region. The span at 343 to 361 (PRKDIKYLKPSGWEREEVM) shows a compositional bias: basic and acidic residues.

This sequence belongs to the alternative oxidase family. The cofactor is Fe cation.

It localises to the mitochondrion inner membrane. In terms of biological role, catalyzes cyanide-resistant oxygen consumption. May increase respiration when the cytochrome respiratory pathway is restricted, or in response to low temperatures. The protein is Alternative oxidase, mitochondrial (AOX1) of Venturia inaequalis (Apple scab fungus).